The chain runs to 208 residues: Glutathione S-transferase 1-1 (208 aa).

Residues 1-80 (MDFYYLPGSA…YLVEKYGKND (80 aa)) form the GST N-terminal domain. Residues Ser9, 50–52 (HTI), and 64–66 (ESR) each bind glutathione. A GST C-terminal domain is found at 86–207 (CPKKRAVINQ…EGCLEFKKFF (122 aa)).

Belongs to the GST superfamily. Theta family. Homodimer.

It carries out the reaction RX + glutathione = an S-substituted glutathione + a halide anion + H(+). In terms of biological role, conjugation of reduced glutathione to a wide number of exogenous and endogenous hydrophobic electrophiles. This is Glutathione S-transferase 1-1 (GST1) from Lucilia cuprina (Green bottle fly).